An 805-amino-acid polypeptide reads, in one-letter code: Probable exo-1,4-beta-xylosidase xlnD (805 aa).

An N-terminal signal peptide occupies residues 1–17 (MAVAALALLALLPQALG). 5 N-linked (GlcNAc...) asparagine glycosylation sites follow: N20, N115, N140, N235, and N244. D308 is an active-site residue. Residues N350, N383, N405, N434, N445, N486, N490, N622, N653, N667, N689, and N711 are each glycosylated (N-linked (GlcNAc...) asparagine).

This sequence belongs to the glycosyl hydrolase 3 family.

It localises to the secreted. It catalyses the reaction Hydrolysis of (1-&gt;4)-beta-D-xylans, to remove successive D-xylose residues from the non-reducing termini.. Its pathway is glycan degradation; xylan degradation. Functionally, xylan 1,4-beta-xylosidase involved in the hydrolysis of xylan, a major structural heterogeneous polysaccharide found in plant biomass representing the second most abundant polysaccharide in the biosphere, after cellulose. The protein is Probable exo-1,4-beta-xylosidase xlnD (xlnD) of Aspergillus aculeatus.